The primary structure comprises 585 residues: MVRLTPRLVAIFLVEKTTSGANFVFHWPLQPQVRLQATHHNNDSAESAIGMLDLDDSDDDENNRFTEVADDTHVLGYEKGFLANMLSPRIELCNQKFEIWVDGLTFLGCPVHIGPNGEWAKRRKPRTTVESNASSSHLVSKPESSHPSTGSFEVKSSSSKSRSSMSLFHVVFVLNVPTATVYRPTVNTMYDHIVVKLVTGLKYEQAKRNYVENECIHILKLTEKYSSQNVPFDVYAAQIPHHSNLASVLATTYEALINMHTAYLEINQSINLSLLWPMSVSTNTLENYELQVRPSTILASQTIFSEEHPSSIEPFVAPYWTLLLLKDTDTIMKRVPLLQNSLLSSFIAIVKPNLTFTDIANRLGISVSECFILAKHLIHWRKAIAIPPLLIRNTYVTSPTANLFNLEEESKLFKKEFPSLPSLSTFLAILSFKPRPFASIIPSKDHELVYLEMLAWLCRRNWVYEQNIYMYILVPEEIKKKAIALIESDESSKNDMQLRKQLEQDNGKESIIIDPHSASLLEQKWIQIIAYERGPEMAPLFTSIVKYLNGRFALQTIWVAEGLPRKLMRNILNEYNDYILRWHSW.

Positions 117–157 (GEWAKRRKPRTTVESNASSSHLVSKPESSHPSTGSFEVKSS) are disordered. Positions 128-138 (TVESNASSSHL) are enriched in polar residues. The span at 148-157 (STGSFEVKSS) shows a compositional bias: low complexity.

The protein belongs to the NPR3 family.

The protein is Nitrogen permease regulator 3-like protein of Schizosaccharomyces pombe (strain 972 / ATCC 24843) (Fission yeast).